The chain runs to 398 residues: MAENFSWLHRGIAEVFPQPTDAESDIESLEKRLATTDRPLRVKYGIDPTGADIHLGHSIPMRKLRGFQDAGHTAVLIIGDFTARIGDPTGKSEMRRQLTEEDVKQNAQTYLDQVRPILDFDTPGRLEVRYNSEWLSRLDLGKITELLATMTVGQMLAKEGFADRYKKENPIFLHEFLYPLMQGYDSVAIEADVELGGTDQKFNIAVGRDLQRHFGQKPQFGVLLPILIGTDGVQKMSKSLGNYVSLSEHPGQKYQKLQGVPDVLLKDYFELLTNLPIDALPENPRDRQMLLAWEIVKQYHGEQAANEAKEAAQSGGKEGAVPEFSLSNVSQFPVKLAYLLGATGLCKSTGEGKRKIQEGGVRLDGDRISDADTTFQQPDELQGRVLQVGKNKFMRLVP.

A 'HIGH' region motif is present at residues 48–57 (PTGADIHLGH). The 'KMSKS' region motif lies at 235-239 (KMSKS). Lysine 238 contributes to the ATP binding site. The region spanning 334–398 (VKLAYLLGAT…GKNKFMRLVP (65 aa)) is the S4 RNA-binding domain.

This sequence belongs to the class-I aminoacyl-tRNA synthetase family. TyrS type 2 subfamily. As to quaternary structure, homodimer.

It is found in the cytoplasm. The enzyme catalyses tRNA(Tyr) + L-tyrosine + ATP = L-tyrosyl-tRNA(Tyr) + AMP + diphosphate + H(+). Catalyzes the attachment of tyrosine to tRNA(Tyr) in a two-step reaction: tyrosine is first activated by ATP to form Tyr-AMP and then transferred to the acceptor end of tRNA(Tyr). The protein is Tyrosine--tRNA ligase of Nostoc sp. (strain PCC 7120 / SAG 25.82 / UTEX 2576).